The primary structure comprises 360 residues: Phosphoserine aminotransferase (360 aa).

Arginine 42 contacts L-glutamate. Pyridoxal 5'-phosphate contacts are provided by residues 76–77, tryptophan 102, threonine 153, aspartate 172, and glutamine 195; that span reads AR. At lysine 196 the chain carries N6-(pyridoxal phosphate)lysine. A pyridoxal 5'-phosphate-binding site is contributed by 237-238; that stretch reads NT.

It belongs to the class-V pyridoxal-phosphate-dependent aminotransferase family. SerC subfamily. In terms of assembly, homodimer. The cofactor is pyridoxal 5'-phosphate.

It is found in the cytoplasm. It carries out the reaction O-phospho-L-serine + 2-oxoglutarate = 3-phosphooxypyruvate + L-glutamate. It catalyses the reaction 4-(phosphooxy)-L-threonine + 2-oxoglutarate = (R)-3-hydroxy-2-oxo-4-phosphooxybutanoate + L-glutamate. The protein operates within amino-acid biosynthesis; L-serine biosynthesis; L-serine from 3-phospho-D-glycerate: step 2/3. It functions in the pathway cofactor biosynthesis; pyridoxine 5'-phosphate biosynthesis; pyridoxine 5'-phosphate from D-erythrose 4-phosphate: step 3/5. In terms of biological role, catalyzes the reversible conversion of 3-phosphohydroxypyruvate to phosphoserine and of 3-hydroxy-2-oxo-4-phosphonooxybutanoate to phosphohydroxythreonine. The chain is Phosphoserine aminotransferase from Aliivibrio fischeri (strain ATCC 700601 / ES114) (Vibrio fischeri).